The sequence spans 373 residues: Spore germination protein KB (373 aa).

10 helical membrane-spanning segments follow: residues 11–31 (LFVM…PGSM), 37–57 (WIAV…YQGI), 78–98 (LSWL…ARVL), 105–125 (LLTF…LMVV), 143–163 (LLFG…IVSG), 185–205 (VFTQ…MIFP), 219–239 (IAMA…ISVL), 269–289 (VFFM…YLYA), 306–326 (LAYP…TNFS), and 338–358 (LYIH…VAVW).

Belongs to the amino acid-polyamine-organocation (APC) superfamily. Spore germination protein (SGP) (TC 2.A.3.9) family.

The protein resides in the cell membrane. Functionally, involved in the germination response to the combination of glucose, fructose, L-asparagine, and KCl. The polypeptide is Spore germination protein KB (gerKB) (Bacillus subtilis (strain 168)).